Here is a 140-residue protein sequence, read N- to C-terminus: Putative cell wall protein (140 aa).

Residues 1 to 21 form the signal peptide; that stretch reads MASSLITSAVIVVVLSLVLGS. A compositionally biased stretch (gly residues) spans 85-98; it reads TGGGIPSYNGGQGA. Residues 85 to 140 are disordered; that stretch reads TGGGIPSYNGGQGAGPHTQLPGGDDTLVPNPGFEAPTPTIGAGTGSNGQVPPVPLP.

Inflorescence.

The protein resides in the secreted. The protein localises to the cell wall. The chain is Putative cell wall protein from Arabidopsis thaliana (Mouse-ear cress).